Here is a 150-residue protein sequence, read N- to C-terminus: Cytochrome b5 type B (150 aa).

Positions 1–15 (MSGSMATAEASGSDG) are excised as a propeptide. Residues 1 to 21 (MSGSMATAEASGSDGKGQEVE) are disordered. S23 carries the post-translational modification Phosphoserine. In terms of domain architecture, Cytochrome b5 heme-binding spans 24–100 (VTYYRMEEVA…LKQYYIGDIH (77 aa)). N6-acetyllysine is present on K34. The residue at position 37 (S37) is a Phosphoserine. Position 39 is an N6-methyllysine (K39). H59 and H83 together coordinate heme. Residue S84 is modified to Phosphoserine. The chain crosses the membrane as a helical span at residues 122 to 144 (CWAYWILPIIGAVLLGFLYRYYT).

This sequence belongs to the cytochrome b5 family. Component of a complex composed of cytochrome b5, NADH-cytochrome b5 reductase (CYB5R3) and MTARC2.

The protein resides in the mitochondrion outer membrane. Cytochrome b5 is a membrane-bound hemoprotein functioning as an electron carrier for several membrane-bound oxygenases. The chain is Cytochrome b5 type B (CYB5B) from Pongo abelii (Sumatran orangutan).